The chain runs to 160 residues: SsrA-binding protein (160 aa).

It belongs to the SmpB family.

Its subcellular location is the cytoplasm. Functionally, required for rescue of stalled ribosomes mediated by trans-translation. Binds to transfer-messenger RNA (tmRNA), required for stable association of tmRNA with ribosomes. tmRNA and SmpB together mimic tRNA shape, replacing the anticodon stem-loop with SmpB. tmRNA is encoded by the ssrA gene; the 2 termini fold to resemble tRNA(Ala) and it encodes a 'tag peptide', a short internal open reading frame. During trans-translation Ala-aminoacylated tmRNA acts like a tRNA, entering the A-site of stalled ribosomes, displacing the stalled mRNA. The ribosome then switches to translate the ORF on the tmRNA; the nascent peptide is terminated with the 'tag peptide' encoded by the tmRNA and targeted for degradation. The ribosome is freed to recommence translation, which seems to be the essential function of trans-translation. The sequence is that of SsrA-binding protein from Marinobacter nauticus (strain ATCC 700491 / DSM 11845 / VT8) (Marinobacter aquaeolei).